A 343-amino-acid chain; its full sequence is Lumican (343 aa).

An N-terminal signal peptide occupies residues 1–18 (MTLNSLPIFLVLISGIFC). At glutamine 19 the chain carries Pyrrolidone carboxylic acid. A sulfotyrosine mark is found at tyrosine 20 and tyrosine 22. The 39-residue stretch at 31 to 69 (DPFGPSTAVCAPECNCPLSYPTAMYCDNLKLKTIPIVPS) folds into the LRRNT domain. LRR repeat units follow at residues 70–91 (GIKY…TFDN), 94–117 (DLQW…VFSK), 120–140 (NLKK…PLPK), 141–162 (TLDD…ALEG), 165–186 (NLTV…GAFK), 190–211 (SLLY…LPHS), 212–232 (LLML…YFQG), and 235–255 (TLQY…PGNV). Asparagine 91 is a glycosylation site (N-linked (GlcNAc...) (keratan sulfate) asparagine). Asparagine 130 carries N-linked (GlcNAc...) (keratan sulfate) asparagine glycosylation. Asparagine 165 carries an N-linked (GlcNAc...) (keratan sulfate) asparagine glycan. The N-linked (GlcNAc...) (keratan sulfate) asparagine glycan is linked to asparagine 257. 3 LRR repeats span residues 260-281 (SLVE…SENL), 282-301 (ENFY…SFCK), and 310-330 (KITH…PQEM). A disulfide bond links cysteine 300 and cysteine 333. A glycan (N-linked (GlcNAc...) asparagine) is linked at asparagine 320.

This sequence belongs to the small leucine-rich proteoglycan (SLRP) family. SLRP class II subfamily. As to quaternary structure, binds to laminin. Contains keratan sulfate.

The protein resides in the secreted. It is found in the extracellular space. It localises to the extracellular matrix. This chain is Lumican (LUM), found in Coturnix japonica (Japanese quail).